Consider the following 86-residue polypeptide: Large ribosomal subunit protein bL27 (86 aa).

Gly residues predominate over residues 1–10 (MAQKKGGGST). Positions 1 to 21 (MAQKKGGGSTRNGRDSESKRL) are disordered.

Belongs to the bacterial ribosomal protein bL27 family.

The polypeptide is Large ribosomal subunit protein bL27 (Cupriavidus pinatubonensis (strain JMP 134 / LMG 1197) (Cupriavidus necator (strain JMP 134))).